Here is a 178-residue protein sequence, read N- to C-terminus: Aspartic proteinase nepenthesin-2 (178 aa).

D98 is an active-site residue.

The protein belongs to the peptidase A1 family.

Its subcellular location is the secreted. It catalyses the reaction Similar to pepsin, but also cleaves on either side of Asp and at Lys-|-Arg.. Its activity is regulated as follows. Inhibited by pepstatin and by diazoacetyl-D,L-norleucine methyl ester (DAN) in the presence of Cu(2+) ions. Its function is as follows. Extracellular proteinase found in the pitcher fluid of carnivorous plants. Digest prey for nitrogen uptake. The protein is Aspartic proteinase nepenthesin-2 of Nepenthes distillatoria (Pitcher plant).